Consider the following 195-residue polypeptide: MYEYFEGIISEVTPSYVVVDVNGIGYKVFSPTPFAYKQGQKAKVYIEQIVRDTGITLYGFQDQDDKGLFLKLLSVSGIGPKSAMAIMAAEDSNSLAEAIEQGEVKYLTRFPGVGKKTASQIVLDLKGKLGDYVARLDKPENGEEISPALNDALLALIALGYTQKEVDRITPKLVEIEADTADQYIKKGLALLLKK.

Residues 1–61 (MYEYFEGIIS…DTGITLYGFQ (61 aa)) form a domain I region. The tract at residues 62–140 (DQDDKGLFLK…DYVARLDKPE (79 aa)) is domain II. The flexible linker stretch occupies residues 141 to 146 (NGEEIS). Positions 146–195 (SPALNDALLALIALGYTQKEVDRITPKLVEIEADTADQYIKKGLALLLKK) are domain III.

The protein belongs to the RuvA family. Homotetramer. Forms an RuvA(8)-RuvB(12)-Holliday junction (HJ) complex. HJ DNA is sandwiched between 2 RuvA tetramers; dsDNA enters through RuvA and exits via RuvB. An RuvB hexamer assembles on each DNA strand where it exits the tetramer. Each RuvB hexamer is contacted by two RuvA subunits (via domain III) on 2 adjacent RuvB subunits; this complex drives branch migration. In the full resolvosome a probable DNA-RuvA(4)-RuvB(12)-RuvC(2) complex forms which resolves the HJ.

The protein resides in the cytoplasm. Functionally, the RuvA-RuvB-RuvC complex processes Holliday junction (HJ) DNA during genetic recombination and DNA repair, while the RuvA-RuvB complex plays an important role in the rescue of blocked DNA replication forks via replication fork reversal (RFR). RuvA specifically binds to HJ cruciform DNA, conferring on it an open structure. The RuvB hexamer acts as an ATP-dependent pump, pulling dsDNA into and through the RuvAB complex. HJ branch migration allows RuvC to scan DNA until it finds its consensus sequence, where it cleaves and resolves the cruciform DNA. The polypeptide is Holliday junction branch migration complex subunit RuvA (Lactobacillus acidophilus (strain ATCC 700396 / NCK56 / N2 / NCFM)).